The sequence spans 1358 residues: Nonribosomal peptide synthetase rstn8 (1358 aa).

The interval 1–23 is disordered; that stretch reads MSHSSHYSPVDSGMVPSSSSTED. The adenylation stretch occupies residues 261-659; it reads YRELDRLSSR…LGEVEYRLHQ (399 aa). The region spanning 795-872 is the Carrier domain; that stretch reads ETVSPAESTL…DQASLVRPLV (78 aa). An O-(pantetheine 4'-phosphoryl)serine modification is found at Ser832. The interval 909-1322 is condensation; that stretch reads EDIYPCTPLQ…DDYSQALHEL (414 aa).

Belongs to the NRP synthetase family. It depends on pantetheine 4'-phosphate as a cofactor.

The enzyme catalyses restrictinol + glycine + H(+) = restricticin + H2O. The protein operates within antifungal biosynthesis. Its function is as follows. Nonribosomal peptide synthetase; part of the gene cluster that mediates the biosynthesis of the tetrahydropyranyl antifungal agent restricticin that acts as an inhibitor of CYP51 and blocks the ergosterol biosynthesis. Within the pathway, rstn8 catalyzes the C3 esterification of restrictinol with glycine to yield restricticin. Rstn8 represents an example of the emerging class of single-module NRPS-like enzymes that perform esterification reactions. Rstn8 displays strict substrate specificity toward glycine as no other natural amino acid is accepted. Rstn8 does not recognize desmethylrestrictinol as a substrate, demonstrating that rstn1-catalyzed methylation, possibly protecting the C4-OH, must precede the final esterification step. The highly reducing polyketide synthase rstn3, the short chain dehydrogenase rstn4, the cyclase rstn5, the FAD-dependent monooxygenase rstn6 and the enoylreductase rstn7 are required to generate the first stable intermediate desmethylrestrictinol. Rstn3 with rstn7 biosynthesize the first polyketide chain intermediate that is reduced by rstn4, followed by epoxidation by rstn6 before 6-endo cyclization via epoxide opening by rstn5 leads to desmethylrestrictinol. The methyltransferase rstn1 then catalyzes the C4 O-methylation of desmethylrestrictinol to produce restrictinol, and the nonribosomal peptide synthetase rstn8 catalyzes the C3 esterification of restrictinol with glycine that leads to restricticin. This chain is Nonribosomal peptide synthetase rstn8, found in Aspergillus nomiae NRRL (strain ATCC 15546 / NRRL 13137 / CBS 260.88 / M93).